The sequence spans 189 residues: Large ribosomal subunit protein bL9 (189 aa).

It belongs to the bacterial ribosomal protein bL9 family.

Functionally, binds to the 23S rRNA. The chain is Large ribosomal subunit protein bL9 from Methylobacterium nodulans (strain LMG 21967 / CNCM I-2342 / ORS 2060).